A 171-amino-acid polypeptide reads, in one-letter code: Adenine phosphoribosyltransferase (171 aa).

The protein belongs to the purine/pyrimidine phosphoribosyltransferase family. In terms of assembly, homodimer.

The protein resides in the cytoplasm. The catalysed reaction is AMP + diphosphate = 5-phospho-alpha-D-ribose 1-diphosphate + adenine. It participates in purine metabolism; AMP biosynthesis via salvage pathway; AMP from adenine: step 1/1. Functionally, catalyzes a salvage reaction resulting in the formation of AMP, that is energically less costly than de novo synthesis. The polypeptide is Adenine phosphoribosyltransferase (Citrifermentans bemidjiense (strain ATCC BAA-1014 / DSM 16622 / JCM 12645 / Bem) (Geobacter bemidjiensis)).